The primary structure comprises 246 residues: Putative F-box/LRR-repeat protein 9 (246 aa).

Residues 18 to 65 (YRNWAELPPELTSSILLRLGAIEILQNAQRVCKSWRRVCQDPSMWRKI) form the F-box domain.

This chain is Putative F-box/LRR-repeat protein 9 (FBL9), found in Arabidopsis thaliana (Mouse-ear cress).